The chain runs to 66 residues: Large ribosomal subunit protein bL35 (66 aa).

2 stretches are compositionally biased toward basic residues: residues 1-16 (MPKFKTHRASAKRFKK) and 23-45 (KRGHAYTSHRFHGKTKKQRRQLR). The segment at 1 to 66 (MPKFKTHRAS…RIRQMLSQMK (66 aa)) is disordered.

Belongs to the bacterial ribosomal protein bL35 family.

The sequence is that of Large ribosomal subunit protein bL35 from Lacticaseibacillus casei (strain BL23) (Lactobacillus casei).